The primary structure comprises 125 residues: Large ribosomal subunit protein bL17 (125 aa).

The protein belongs to the bacterial ribosomal protein bL17 family. Part of the 50S ribosomal subunit. Contacts protein L32.

The sequence is that of Large ribosomal subunit protein bL17 from Syntrophus aciditrophicus (strain SB).